A 43-amino-acid polypeptide reads, in one-letter code: Oxygen-evolving enhancer protein 2 (43 aa).

It belongs to the PsbP family.

It localises to the plastid. The protein localises to the chloroplast thylakoid membrane. May be involved in the regulation of photosystem II. The sequence is that of Oxygen-evolving enhancer protein 2 from Physcomitrium patens (Spreading-leaved earth moss).